The chain runs to 65 residues: UPF0434 protein BH12860 (65 aa).

This sequence belongs to the UPF0434 family.

The chain is UPF0434 protein BH12860 from Bartonella henselae (strain ATCC 49882 / DSM 28221 / CCUG 30454 / Houston 1) (Rochalimaea henselae).